The sequence spans 142 residues: Ribosome maturation factor RimP (142 aa).

It belongs to the RimP family.

The protein resides in the cytoplasm. Its function is as follows. Required for maturation of 30S ribosomal subunits. This chain is Ribosome maturation factor RimP, found in Nitratiruptor sp. (strain SB155-2).